The sequence spans 167 residues: Respiratory supercomplex factor 1-A, mitochondrial (167 aa).

In terms of domain architecture, HIG1 spans 1-86 (MCSDFEEETS…TERKQRREFE (86 aa)). A run of 2 helical transmembrane segments spans residues 21-38 (EPLI…LYRA) and 53-75 (MFRA…GMYY). A coiled-coil region spans residues 75–107 (YKTERKQRREFEKKVEERKAQEKRDAWLRELEA).

The protein belongs to the RCF1 family. In terms of assembly, associates with the respiratory chain complex III/complex IV supercomplex.

The protein resides in the mitochondrion membrane. Its function is as follows. Cytochrome c oxidase subunit which plays a role in assembly of respiratory supercomplexes. In Talaromyces marneffei (strain ATCC 18224 / CBS 334.59 / QM 7333) (Penicillium marneffei), this protein is Respiratory supercomplex factor 1-A, mitochondrial (rcf1-A).